Consider the following 395-residue polypeptide: Acetate kinase (395 aa).

Mg(2+) is bound at residue Asn8. ATP is bound at residue Lys15. Arg89 is a substrate binding site. Asp146 serves as the catalytic Proton donor/acceptor. Residues 206–210 (HLGNG), 281–283 (DLR), and 329–333 (GIGEN) contribute to the ATP site. Glu382 contacts Mg(2+).

The protein belongs to the acetokinase family. Homodimer. Mg(2+) serves as cofactor. It depends on Mn(2+) as a cofactor.

Its subcellular location is the cytoplasm. The enzyme catalyses acetate + ATP = acetyl phosphate + ADP. The protein operates within metabolic intermediate biosynthesis; acetyl-CoA biosynthesis; acetyl-CoA from acetate: step 1/2. With respect to regulation, induced by glucose excess, the induction may be mediated by CcpA transcriptional regulator. Catalyzes the formation of acetyl phosphate from acetate and ATP. Can also catalyze the reverse reaction. Appears to favor the formation of acetate. Involved in the secretion of excess carbohydrate. This Bacillus subtilis (strain 168) protein is Acetate kinase.